The following is a 445-amino-acid chain: Argininosuccinate synthase (445 aa).

ATP is bound by residues 17 to 25 (AFSGGLDTS) and A43. Y99 lines the L-citrulline pocket. Residues G129 and T131 each coordinate ATP. L-aspartate contacts are provided by T131, N135, and D136. N135 contacts L-citrulline. D136 lines the ATP pocket. L-citrulline contacts are provided by R139 and S192. D194 contacts ATP. Residues T201, E203, and E280 each coordinate L-citrulline.

It belongs to the argininosuccinate synthase family. Type 2 subfamily. Homotetramer.

It localises to the cytoplasm. The enzyme catalyses L-citrulline + L-aspartate + ATP = 2-(N(omega)-L-arginino)succinate + AMP + diphosphate + H(+). It participates in amino-acid biosynthesis; L-arginine biosynthesis; L-arginine from L-ornithine and carbamoyl phosphate: step 2/3. The polypeptide is Argininosuccinate synthase (argG) (Burkholderia multivorans (strain ATCC 17616 / 249)).